The following is a 221-amino-acid chain: Probable septum site-determining protein MinC (221 aa).

This sequence belongs to the MinC family. As to quaternary structure, interacts with MinD and FtsZ.

Functionally, cell division inhibitor that blocks the formation of polar Z ring septums. Rapidly oscillates between the poles of the cell to destabilize FtsZ filaments that have formed before they mature into polar Z rings. Prevents FtsZ polymerization. In Shewanella loihica (strain ATCC BAA-1088 / PV-4), this protein is Probable septum site-determining protein MinC.